A 388-amino-acid polypeptide reads, in one-letter code: Trans-enoyl reductase tenC (388 aa).

51 to 54 (VDGK) contributes to the NADP(+) binding site. Position 142 to 149 (142 to 149 (VGIASVGM)) interacts with substrate. Residues 219-222 (SSES), tyrosine 237, and 284-285 (LD) each bind NADP(+). Residue 304 to 308 (SFTQF) participates in substrate binding. 373-374 (IK) serves as a coordination point for NADP(+).

It belongs to the zinc-containing alcohol dehydrogenase family. In terms of assembly, monomer.

Its pathway is secondary metabolite biosynthesis. Its function is as follows. Trans-enoyl reductase; part of the gene cluster that mediates the biosynthesis of tenellin-type 2-pyridones, iron-chelating compounds involved in iron stress tolerance, competition with the natural competitor fungus Metarhizium robertsii and insect hosts infection. TenC collaborates with the hybrid PKS-NRPS synthetase tenS to catalyze the assembly of the polyketide-amino acid backbone, since tenS lacks a designated enoylreductase (ER) domain. Upon formation of the polyketide backbone on the thiotemplate of tenS, the triketide is transferred to the NRPS module and linked to tyrosine to produce the pyrrolidine-2-dione intermediates, including pretellinin A, 11-hydropretellenin A, 12-hydropretellenin A, 13-hydropretellenin A, 14-hydropretellenin A, 12-oxopretellenin A and prototellinin D. The pathway begins with the assembly of the polyketide-amino acid backbone by the hybrid PKS-NRPS tenS with the help of the enoyl reductase tenC. These enzymes catalyze the synthesis of the pyrrolidine-2-dione intermediates pretellinin A, 11-hydropretellenin A, 12-hydropretellenin A, 13-hydropretellenin A, 14-hydropretellenin A, 12-oxopretellenin A and prototellinin D. The cytochrome P450 monooxygenase tenA then catalyzes an oxidative ring expansion of pretenellin A and 14-hydropretellenin A to form the 2-pyridone core, leading to pretenellin B and pyridovericin, respectively. The cytochrome P450 monooxygenase tenB is then required for the selective N-hydroxylation of the 2-pyridone nitrogen of yield tellinin and 15-hydroxytellenin (15-HT), respectively. The UDP-glucosyltransferase GT1 and the methyltransferase MT1, located outside the tenS gene cluster, contribute to the stepwise glycosylation and methylation of 15-HT to obtain the glycoside pyridovericin-N-O-(4-O-methyl-beta-D-glucopyranoside) (PMGP). Additional related compounds such as 1-O-methyl-15-HT, (8Z)-1-O-methyl-15-HT, and O-methyltenellin A are also produced but the enzymes involved in their biosynthesis have still to be determined. The sequence is that of Trans-enoyl reductase tenC from Beauveria bassiana (strain ARSEF 2860) (White muscardine disease fungus).